Here is a 227-residue protein sequence, read N- to C-terminus: MKEKIGMMLSDVDLEWLKKKYCIKNKGKFLKIGLTGGIGSGKSTISKMFKNMGIDVIDADKIAREVLEKYPPILEYIEENFGEQYIDEFGNLNRREFGNHIFSISKKEREKYENIIIPYIKLEIENQFKLYEKIGKKVCLLDAPLLIEQDMQKDLDFTVLSWVNKETQIKRVGIRDNLSEDEILNRIEAQISLDKKRELVDFIIDNSNTIEETRVQVEKLFQFINCL.

The DPCK domain maps to 31–227 (KIGLTGGIGS…EKLFQFINCL (197 aa)). 39-44 (GSGKST) serves as a coordination point for ATP.

This sequence belongs to the CoaE family.

The protein localises to the cytoplasm. The catalysed reaction is 3'-dephospho-CoA + ATP = ADP + CoA + H(+). It participates in cofactor biosynthesis; coenzyme A biosynthesis; CoA from (R)-pantothenate: step 5/5. Its function is as follows. Catalyzes the phosphorylation of the 3'-hydroxyl group of dephosphocoenzyme A to form coenzyme A. The protein is Dephospho-CoA kinase of Clostridium tetani (strain Massachusetts / E88).